A 302-amino-acid chain; its full sequence is Cyclopropane mycolic acid synthase 2 (302 aa).

Residues 41–42, 76–84, 102–107, and 131–132 each bind S-adenosyl-L-methionine; these read YS, LLDIGCGWG, TLSENQ, and WE. Cys284 is a catalytic residue.

The protein belongs to the CFA/CMAS family. In terms of assembly, homodimer.

It localises to the cytoplasm. The enzyme catalyses a 1-acyl-2-(9Z)-enoyl-sn-glycero-3-phospholipid + S-adenosyl-L-methionine = a 1-acyl-2-(9-cyclopronane)-acyl-sn-glycero-3-phospholipid + S-adenosyl-L-homocysteine + H(+). It functions in the pathway lipid metabolism; mycolic acid biosynthesis. Functionally, catalyzes the formation of trans cyclopropanated ketomycolate or methoxymycolate through the conversion of a double bond to a cyclopropane ring at the proximal position of an oxygenated mycolic acid via the transfer of a methylene group from S-adenosyl-L-methionine. In the absence of MmaA2, CmaA2 has a non-specific cis-cyclopropanating activity and is able to catalyze the conversion of a double bond to a cis cyclopropane ring at the distal position of an alpha mycolic acid. Cyclopropanated mycolic acids are key factors participating in cell envelope permeability, host immunomodulation and persistence. This is Cyclopropane mycolic acid synthase 2 (cmaA2) from Mycobacterium bovis (strain ATCC BAA-935 / AF2122/97).